Here is a 54-residue protein sequence, read N- to C-terminus: UPF0391 membrane protein Reut_A0124 (54 aa).

2 consecutive transmembrane segments (helical) span residues 5 to 25 and 30 to 50; these read ALVF…GIAA and IAKI…VMGL.

It belongs to the UPF0391 family.

It localises to the cell membrane. The sequence is that of UPF0391 membrane protein Reut_A0124 from Cupriavidus pinatubonensis (strain JMP 134 / LMG 1197) (Cupriavidus necator (strain JMP 134)).